The primary structure comprises 232 residues: Enolase-phosphatase E1 (232 aa).

The protein belongs to the HAD-like hydrolase superfamily. MasA/MtnC family. Monomer. Mg(2+) serves as cofactor.

It carries out the reaction 5-methylsulfanyl-2,3-dioxopentyl phosphate + H2O = 1,2-dihydroxy-5-(methylsulfanyl)pent-1-en-3-one + phosphate. The protein operates within amino-acid biosynthesis; L-methionine biosynthesis via salvage pathway; L-methionine from S-methyl-5-thio-alpha-D-ribose 1-phosphate: step 3/6. It participates in amino-acid biosynthesis; L-methionine biosynthesis via salvage pathway; L-methionine from S-methyl-5-thio-alpha-D-ribose 1-phosphate: step 4/6. Functionally, bifunctional enzyme that catalyzes the enolization of 2,3-diketo-5-methylthiopentyl-1-phosphate (DK-MTP-1-P) into the intermediate 2-hydroxy-3-keto-5-methylthiopentenyl-1-phosphate (HK-MTPenyl-1-P), which is then dephosphorylated to form the acireductone 1,2-dihydroxy-3-keto-5-methylthiopentene (DHK-MTPene). The protein is Enolase-phosphatase E1 of Xylella fastidiosa (strain Temecula1 / ATCC 700964).